The primary structure comprises 375 residues: 5-amino-6-(D-ribitylamino)uracil--L-tyrosine 4-hydroxyphenyl transferase 1 (375 aa).

The Radical SAM core domain maps to 50–284 (VTYVVNRNIN…AVSRILFHGH (235 aa)). 3 residues coordinate [4Fe-4S] cluster: Cys64, Cys68, and Cys71.

The protein belongs to the radical SAM superfamily. CofH family. Consists of two subunits, CofG and CofH. Requires [4Fe-4S] cluster as cofactor.

The catalysed reaction is 5-amino-6-(D-ribitylamino)uracil + L-tyrosine + S-adenosyl-L-methionine = 5-amino-5-(4-hydroxybenzyl)-6-(D-ribitylimino)-5,6-dihydrouracil + 2-iminoacetate + 5'-deoxyadenosine + L-methionine + H(+). The protein operates within cofactor biosynthesis; coenzyme F0 biosynthesis. Functionally, catalyzes the radical-mediated synthesis of 5-amino-5-(4-hydroxybenzyl)-6-(D-ribitylimino)-5,6-dihydrouracil from 5-amino-6-(D-ribitylamino)uracil and L-tyrosine. This Methanosarcina acetivorans (strain ATCC 35395 / DSM 2834 / JCM 12185 / C2A) protein is 5-amino-6-(D-ribitylamino)uracil--L-tyrosine 4-hydroxyphenyl transferase 1.